A 127-amino-acid polypeptide reads, in one-letter code: Glycine cleavage system H protein (127 aa).

Residues 24-106 (TVTVGITDHA…FEGAWIAKIK (83 aa)) enclose the Lipoyl-binding domain. Residue K65 is modified to N6-lipoyllysine.

This sequence belongs to the GcvH family. The glycine cleavage system is composed of four proteins: P, T, L and H. Requires (R)-lipoate as cofactor.

Its function is as follows. The glycine cleavage system catalyzes the degradation of glycine. The H protein shuttles the methylamine group of glycine from the P protein to the T protein. The sequence is that of Glycine cleavage system H protein from Marinomonas sp. (strain MWYL1).